Consider the following 177-residue polypeptide: Alkyl hydroperoxide reductase AhpD (177 aa).

C130 serves as the catalytic Proton donor. C130 and C133 are disulfide-bonded. C133 acts as the Cysteine sulfenic acid (-SOH) intermediate in catalysis.

This sequence belongs to the AhpD family. Homotrimer.

The enzyme catalyses N(6)-[(R)-dihydrolipoyl]-L-lysyl-[lipoyl-carrier protein] + a hydroperoxide = N(6)-[(R)-lipoyl]-L-lysyl-[lipoyl-carrier protein] + an alcohol + H2O. Antioxidant protein with alkyl hydroperoxidase activity. Required for the reduction of the AhpC active site cysteine residues and for the regeneration of the AhpC enzyme activity. The sequence is that of Alkyl hydroperoxide reductase AhpD from Mycobacterium bovis (strain ATCC BAA-935 / AF2122/97).